Here is a 329-residue protein sequence, read N- to C-terminus: Fructose-1,6-bisphosphatase class 1 (329 aa).

4 residues coordinate Mg(2+): E84, D103, L105, and D106. Residues 106 to 109 (DGSS), N196, and K262 contribute to the substrate site. E268 lines the Mg(2+) pocket.

The protein belongs to the FBPase class 1 family. In terms of assembly, homotetramer. Mg(2+) serves as cofactor.

Its subcellular location is the cytoplasm. It carries out the reaction beta-D-fructose 1,6-bisphosphate + H2O = beta-D-fructose 6-phosphate + phosphate. The protein operates within carbohydrate biosynthesis; gluconeogenesis. This chain is Fructose-1,6-bisphosphatase class 1, found in Shewanella loihica (strain ATCC BAA-1088 / PV-4).